A 235-amino-acid chain; its full sequence is ATP phosphoribosyltransferase (235 aa).

Belongs to the ATP phosphoribosyltransferase family. Short subfamily. In terms of assembly, heteromultimer composed of HisG and HisZ subunits.

The protein localises to the cytoplasm. The catalysed reaction is 1-(5-phospho-beta-D-ribosyl)-ATP + diphosphate = 5-phospho-alpha-D-ribose 1-diphosphate + ATP. The protein operates within amino-acid biosynthesis; L-histidine biosynthesis; L-histidine from 5-phospho-alpha-D-ribose 1-diphosphate: step 1/9. Catalyzes the condensation of ATP and 5-phosphoribose 1-diphosphate to form N'-(5'-phosphoribosyl)-ATP (PR-ATP). Has a crucial role in the pathway because the rate of histidine biosynthesis seems to be controlled primarily by regulation of HisG enzymatic activity. In Synechococcus sp. (strain JA-2-3B'a(2-13)) (Cyanobacteria bacterium Yellowstone B-Prime), this protein is ATP phosphoribosyltransferase.